Here is a 225-residue protein sequence, read N- to C-terminus: Suppressor of cytokine signaling 3 (225 aa).

The interval 22 to 33 (LKTFSSKSEYQL) is kinase inhibitory region (KIR). The interval 34–45 (VVNAVRKLQESG) is extended SH2 subdomain (ESS). An SH2 domain is found at 46–142 (FYWSAVTGGE…TPSFSLPPTE (97 aa)). The tract at residues 131–160 (PGTPSFSLPPTEPSSEVPEQPPAQALPGST) is disordered. The SOCS box domain occupies 177-224 (VLSRPLSSNVATLQHLCRKTVNGHLDSYEKVTQLPGPIREFLDQYDAP).

As to quaternary structure, interacts with multiple activated proteins of the tyrosine kinase signaling pathway including IGF1 receptor, insulin receptor and JAK2. Binding to JAK2 is mediated through the KIR and SH2 domains to a phosphorylated tyrosine residue within the JAK2 JH1 domain. Binds specific activated tyrosine residues of the leptin, EPO, IL12, GSCF and gp130 receptors. Interaction with CSNK1E stabilizes SOCS3 protein. Component of the probable ECS(SOCS3) E3 ubiquitin-protein ligase complex which contains CUL5, RNF7/RBX2, elongin BC complex and SOCS3. Interacts with CUL5, RNF7, ELOB and ELOC. Interacts with FGFR3. Interacts with INSR. Interacts with BCL10; this interaction may interfere with BCL10-binding with PELI2. Interacts with NOD2 (via CARD domain); the interaction promotes NOD2 degradation. Post-translationally, phosphorylated on tyrosine residues after stimulation by the cytokines, IL-2, EPO or IGF1. Low expression in lung, spleen and thymus. Expressed in Th2 but not TH1 cells.

Its pathway is protein modification; protein ubiquitination. In terms of biological role, SOCS family proteins form part of a classical negative feedback system that regulates cytokine signal transduction. SOCS3 is involved in negative regulation of cytokines that signal through the JAK/STAT pathway. Inhibits cytokine signal transduction by binding to tyrosine kinase receptors including IL6ST/gp130, LIF, erythropoietin, insulin, IL12, GCSF and leptin receptors. Binding to JAK2 inhibits its kinase activity and regulates IL6 signaling. Suppresses fetal liver erythropoiesis. Regulates onset and maintenance of allergic responses mediated by T-helper type 2 cells. Probable substrate recognition component of a SCF-like ECS (Elongin BC-CUL2/5-SOCS-box protein) E3 ubiquitin-protein ligase complex which mediates the ubiquitination and subsequent proteasomal degradation of target proteins. The polypeptide is Suppressor of cytokine signaling 3 (Mus musculus (Mouse)).